A 4644-amino-acid polypeptide reads, in one-letter code: Cytoplasmic dynein 1 heavy chain 1 (4644 aa).

Position 2 is an N-acetylserine (S2). Residues 2 to 1865 (SEPGGGEDGS…SIQMANAKFN (1864 aa)) are stem. Coiled coils occupy residues 48–69 (AALE…FLSD), 179–200 (SVEK…NIEI), 453–476 (AHRK…QLRA), and 541–564 (TEAW…RITA). S68 carries the phosphoserine modification. The interval 446 to 701 (MVWRINPAHR…NTQEIFDDWA (256 aa)) is interaction with DYNC1I2. The tract at residues 649–800 (AKQIDRQLTA…EKVEERNTIS (152 aa)) is interaction with DYNC1LI2. The residue at position 1123 (K1123) is an N6-acetyllysine. Residues 1169–1201 (TYVQSLKRKIKQFEKQVELYRNGQRLLEKQRFQ) are a coiled coil. The residue at position 1228 (S1228) is a Phosphoserine. Coiled coils occupy residues 1229–1250 (AIQQ…AVES) and 1355–1371 (RKLR…LKNF). 4 AAA regions span residues 1866–2097 (YGFE…VLVS), 2178–2450 (EELK…LTRL), 2554–2803 (EVET…WVRG), and 2897–3166 (VFYE…GGRT). ATP contacts are provided by residues 1904–1911 (GPAGTGKT) and 2222–2229 (GPSGSGKS). The segment at 2388–2408 (GEDEAQRRRKGKEDEGEEAAS) is disordered. ATP is bound by residues 2593–2600 (GPPGSGKT) and 2935–2942 (GVSGAGKT). 3 coiled-coil regions span residues 3187–3273 (EKRS…ADKQ), 3394–3498 (AIAQ…KNQM), and 3735–3798 (EFQL…VSQQ). The tract at residues 3187–3498 (EKRSELEEQQ…KTSETFKNQM (312 aa)) is stalk. N6-acetyllysine is present on K3478. 2 AAA regions span residues 3551-3780 (LSNA…EVTR) and 4003-4219 (AHMF…TVDT). S4160 carries the phosphoserine modification. An N6-acetyllysine modification is found at K4281. Phosphothreonine is present on T4364. S4366 carries the phosphoserine modification.

The protein belongs to the dynein heavy chain family. Homodimer. The cytoplasmic dynein 1 complex consists of two catalytic heavy chains (HCs) and a number of non-catalytic subunits presented by intermediate chains (ICs), light intermediate chains (LICs) and light chains (LCs); the composition seems to vary in respect to the IC, LIC and LC composition. The heavy chain homodimer serves as a scaffold for the probable homodimeric assembly of the respective non-catalytic subunits. The ICs and LICs bind directly to the HC dimer and dynein LCs assemble on the IC dimer. Interacts with DYNC1LI1; DYNC1LI1 and DYNC1LI2 bind mutually exclusive to DYNC1H1. Interacts with DYNC1LI2; DYNC1LI1 and DYNC1LI2 bind mutually exclusive to DYNC1H1. Interacts with DYNC1I2. Interacts with BICD2. Interacts with DNALI1.

The protein localises to the cytoplasm. It localises to the cytoskeleton. Cytoplasmic dynein 1 acts as a motor for the intracellular retrograde motility of vesicles and organelles along microtubules. Dynein has ATPase activity; the force-producing power stroke is thought to occur on release of ADP. Plays a role in mitotic spindle assembly and metaphase plate congression. In Mus musculus (Mouse), this protein is Cytoplasmic dynein 1 heavy chain 1 (Dync1h1).